We begin with the raw amino-acid sequence, 246 residues long: tRNA pseudouridine synthase A (246 aa).

Residue D52 is the Nucleophile of the active site. Residue Y111 coordinates substrate.

This sequence belongs to the tRNA pseudouridine synthase TruA family. Homodimer.

It carries out the reaction uridine(38/39/40) in tRNA = pseudouridine(38/39/40) in tRNA. Its function is as follows. Formation of pseudouridine at positions 38, 39 and 40 in the anticodon stem and loop of transfer RNAs. The sequence is that of tRNA pseudouridine synthase A from Borreliella burgdorferi (strain ZS7) (Borrelia burgdorferi).